A 610-amino-acid chain; its full sequence is Diol dehydratase-reactivating factor large subunit (610 aa).

ATP is bound at residue 11-13 (NSS). 3 residues coordinate Mg(2+): Thr-105, Asp-166, and Asp-183. ATP is bound by residues 459–462 (EEIK), 557–558 (GS), and Arg-591.

Belongs to the DdrA/PduG family. As to quaternary structure, component of the DDR complex, a heterotetramer of DdrA(2)/DdrB(2). The DDR complex interacts with the diol dehydratase complex in the presence of ADP but not ATP. Requires Mg(2+) as cofactor.

The enzyme catalyses ATP + H2O = ADP + phosphate + H(+). In terms of biological role, large subunit of the diol dehydratase-reactivating factor (DDR), which reactivates suicidally inhibited adenosylcobalamin-dependent diol dehydratase (DD, pddA, pddB, pddC). DDR acts as a chaperone, reactivating inactivated DD holoenzyme in the presence of ATP, Mg(2+) and free adenosylcobalamin (AdoCbl), by mediating the exchange of the tightly bound damaged cofactor AdoCbl for a free intact one. Reactivation takes place in two steps: ADP-dependent cobalamin release, then ATP-dependent dissociation of the DD apoenzyme-DDR complex. DDR has weak ATPase activity which is required for DD reactivation. This subunit contains the adenosine nucleotide binding site. Activates glycerol-inactivated, O2-inactivated holoenzyme and inactivated enzyme-cyanocobalamin complex. Also reactivates glycerol-inactivated hologlycerol dehydratase, a DD isozyme. The polypeptide is Diol dehydratase-reactivating factor large subunit (Klebsiella michiganensis (strain ATCC 8724 / DSM 4798 / JCM 20051 / NBRC 3318 / NRRL B-199 / KCTC 1686 / BUCSAV 143 / CCM 1901)).